The sequence spans 153 residues: Antibacterial peptide PMAP-23 (153 aa).

The first 29 residues, 1-29, serve as a signal peptide directing secretion; it reads METQRASLCLGRWSLWLLLLGLVVPSASA. At glutamine 30 the chain carries Pyrrolidone carboxylic acid. Residues 30-130 constitute a propeptide that is removed on maturation; the sequence is QALSYREAVL…DITCNQLQSV (101 aa). The disordered stretch occupies residues 61 to 80; it reads DQPPKADEDPGTPKPVSFTV. Cystine bridges form between cysteine 85/cysteine 96 and cysteine 107/cysteine 124.

It belongs to the cathelicidin family.

It localises to the secreted. In terms of biological role, exerts antimicrobial activity against both Gram-positive and negative bacteria at concentrations of 2-16 micro molar. Its activity appears to be mediated by its ability to damage bacterial membranes. The protein is Antibacterial peptide PMAP-23 (PMAP23) of Sus scrofa (Pig).